The following is a 610-amino-acid chain: UvrABC system protein C (610 aa).

One can recognise a GIY-YIG domain in the interval Ser-16–Val-94. The UVR domain occupies Asp-204–Val-239.

It belongs to the UvrC family. In terms of assembly, interacts with UvrB in an incision complex.

The protein resides in the cytoplasm. In terms of biological role, the UvrABC repair system catalyzes the recognition and processing of DNA lesions. UvrC both incises the 5' and 3' sides of the lesion. The N-terminal half is responsible for the 3' incision and the C-terminal half is responsible for the 5' incision. The polypeptide is UvrABC system protein C (Escherichia coli O45:K1 (strain S88 / ExPEC)).